A 279-amino-acid chain; its full sequence is Thioredoxin domain-containing protein plp1 (279 aa).

Positions 56-70 (RKEDTQDYNEPELHN) are enriched in basic and acidic residues. Residues 56–75 (RKEDTQDYNEPELHNSNDPT) form a disordered region. The region spanning 137 to 248 (FLTVENEREV…LEFRLLKSSA (112 aa)) is the Thioredoxin domain. A compositionally biased stretch (basic and acidic residues) spans 254-267 (EESSSNKSIYHDEL). The interval 254-279 (EESSSNKSIYHDELQNNQSDDSDFFE) is disordered. Phosphoserine occurs at positions 272 and 275.

This sequence belongs to the phosducin family.

It is found in the cytoplasm. Its subcellular location is the nucleus. In terms of biological role, inhibits early G-protein signaling events following pheromone stimulation. May help create heterodimerizable beta-tubulin by facilitating the efficient transfer of nascent beta-tubulin polypeptides to the folding apparatus. The protein is Thioredoxin domain-containing protein plp1 (plp1) of Schizosaccharomyces pombe (strain 972 / ATCC 24843) (Fission yeast).